A 490-amino-acid chain; its full sequence is Cardiolipin synthase 1 (490 aa).

A run of 2 helical transmembrane segments spans residues 9-29 (ILTI…FVII) and 42-62 (WAWL…YLFL). 2 PLD phosphodiesterase domains span residues 225 to 252 (MNNR…GDDY) and 403 to 430 (QNGF…DFRS). Catalysis depends on residues His230, Lys232, Asp237, His408, Lys410, and Asp415.

Belongs to the phospholipase D family. Cardiolipin synthase subfamily.

The protein resides in the cell membrane. It carries out the reaction 2 a 1,2-diacyl-sn-glycero-3-phospho-(1'-sn-glycerol) = a cardiolipin + glycerol. Catalyzes the reversible phosphatidyl group transfer from one phosphatidylglycerol molecule to another to form cardiolipin (CL) (diphosphatidylglycerol) and glycerol. This chain is Cardiolipin synthase 1 (cls1), found in Staphylococcus epidermidis (strain ATCC 12228 / FDA PCI 1200).